The primary structure comprises 490 residues: Ketol-acid reductoisomerase (NADP(+)) (490 aa).

The region spanning Leu17–Ser208 is the KARI N-terminal Rossmann domain. NADP(+) contacts are provided by residues Cys45 to Gln48, Arg68, Arg76, Ser78, and Asp108 to Gln110. His132 is an active-site residue. Residue Gly158 coordinates NADP(+). KARI C-terminal knotted domains lie at Ser209–Glu353 and Phe355–Met486. Residues Asp217, Glu221, Glu389, and Glu393 each coordinate Mg(2+). Ser414 lines the substrate pocket.

This sequence belongs to the ketol-acid reductoisomerase family. Mg(2+) is required as a cofactor.

The enzyme catalyses (2R)-2,3-dihydroxy-3-methylbutanoate + NADP(+) = (2S)-2-acetolactate + NADPH + H(+). It catalyses the reaction (2R,3R)-2,3-dihydroxy-3-methylpentanoate + NADP(+) = (S)-2-ethyl-2-hydroxy-3-oxobutanoate + NADPH + H(+). The protein operates within amino-acid biosynthesis; L-isoleucine biosynthesis; L-isoleucine from 2-oxobutanoate: step 2/4. It participates in amino-acid biosynthesis; L-valine biosynthesis; L-valine from pyruvate: step 2/4. Its function is as follows. Involved in the biosynthesis of branched-chain amino acids (BCAA). Catalyzes an alkyl-migration followed by a ketol-acid reduction of (S)-2-acetolactate (S2AL) to yield (R)-2,3-dihydroxy-isovalerate. In the isomerase reaction, S2AL is rearranged via a Mg-dependent methyl migration to produce 3-hydroxy-3-methyl-2-ketobutyrate (HMKB). In the reductase reaction, this 2-ketoacid undergoes a metal-dependent reduction by NADPH to yield (R)-2,3-dihydroxy-isovalerate. This chain is Ketol-acid reductoisomerase (NADP(+)), found in Pseudoalteromonas translucida (strain TAC 125).